A 526-amino-acid chain; its full sequence is Glucose-6-phosphate isomerase (526 aa).

Glu343 functions as the Proton donor in the catalytic mechanism. Catalysis depends on residues His374 and Lys494.

It belongs to the GPI family.

It is found in the cytoplasm. It catalyses the reaction alpha-D-glucose 6-phosphate = beta-D-fructose 6-phosphate. Its pathway is carbohydrate biosynthesis; gluconeogenesis. It participates in carbohydrate degradation; glycolysis; D-glyceraldehyde 3-phosphate and glycerone phosphate from D-glucose: step 2/4. Its function is as follows. Catalyzes the reversible isomerization of glucose-6-phosphate to fructose-6-phosphate. This Dechloromonas aromatica (strain RCB) protein is Glucose-6-phosphate isomerase.